The sequence spans 430 residues: Ribosomal protein uS12 methylthiotransferase RimO (430 aa).

Residues 1 to 116 (MRVGIKVLGC…IANAIENGTD (116 aa)) enclose the MTTase N-terminal domain. Residues Cys10, Cys46, Cys79, Cys148, Cys152, and Cys155 each contribute to the [4Fe-4S] cluster site. In terms of domain architecture, Radical SAM core spans 134–365 (LEERPYAYVK…LLQAEISNSR (232 aa)). One can recognise a TRAM domain in the interval 367–430 (DRFVGKKLKF…DEYDMWGSVI (64 aa)).

It belongs to the methylthiotransferase family. RimO subfamily. Monomer. Requires [4Fe-4S] cluster as cofactor.

The protein resides in the cytoplasm. It catalyses the reaction L-aspartate(89)-[ribosomal protein uS12]-hydrogen + (sulfur carrier)-SH + AH2 + 2 S-adenosyl-L-methionine = 3-methylsulfanyl-L-aspartate(89)-[ribosomal protein uS12]-hydrogen + (sulfur carrier)-H + 5'-deoxyadenosine + L-methionine + A + S-adenosyl-L-homocysteine + 2 H(+). In terms of biological role, catalyzes the methylthiolation of an aspartic acid residue of ribosomal protein uS12. This Thermotoga maritima (strain ATCC 43589 / DSM 3109 / JCM 10099 / NBRC 100826 / MSB8) protein is Ribosomal protein uS12 methylthiotransferase RimO.